A 469-amino-acid chain; its full sequence is Probable Xaa-Pro aminopeptidase PEPP (469 aa).

Mn(2+) contacts are provided by Asp257, Asp268, Glu391, and Glu436.

Belongs to the peptidase M24B family. Mn(2+) is required as a cofactor.

The enzyme catalyses Release of any N-terminal amino acid, including proline, that is linked to proline, even from a dipeptide or tripeptide.. In terms of biological role, catalyzes the removal of a penultimate prolyl residue from the N-termini of peptides. In Fusarium vanettenii (strain ATCC MYA-4622 / CBS 123669 / FGSC 9596 / NRRL 45880 / 77-13-4) (Fusarium solani subsp. pisi), this protein is Probable Xaa-Pro aminopeptidase PEPP (PEPP).